The primary structure comprises 137 residues: MLQPKRTKFRKQHKGRIHGEAKGGFLLNFGGFGLKATEPERVTARQIEAARRAITRHMKRQGRVWIRVFPDVPVTSKPTEVRMGKGKGSVDYWAAKVKPGRIMFEIDGVSETIAREALRLGAMKLPVMTRIVVREDW.

Belongs to the universal ribosomal protein uL16 family. In terms of assembly, part of the 50S ribosomal subunit.

Its function is as follows. Binds 23S rRNA and is also seen to make contacts with the A and possibly P site tRNAs. The sequence is that of Large ribosomal subunit protein uL16 from Cereibacter sphaeroides (strain ATCC 17029 / ATH 2.4.9) (Rhodobacter sphaeroides).